Consider the following 63-residue polypeptide: Protein Wfdc21 (63 aa).

A signal peptide spans Met-1–Ala-24. One can recognise a WAP; atypical domain in the interval Ala-25–Asn-63. Disulfide bonds link Cys-35–Cys-56, Cys-39–Cys-51, and Cys-45–Cys-60.

In terms of tissue distribution, predominantly expressed in white adipose tissue and liver.

Its subcellular location is the secreted. Its function is as follows. May promote activation of the metalloproteinase MMP2. This chain is Protein Wfdc21, found in Mus musculus (Mouse).